The following is a 990-amino-acid chain: Tyrosine-protein phosphatase 3 (990 aa).

Disordered stretches follow at residues glutamine 47 to valine 88, asparagine 100 to glutamate 193, proline 246 to glutamine 414, and lysine 431 to leucine 452. Composition is skewed to low complexity over residues asparagine 52–valine 88 and asparagine 100–asparagine 117. Residues leucine 127–lysine 136 are compositionally biased toward polar residues. Composition is skewed to low complexity over residues asparagine 137–asparagine 191, serine 250–leucine 271, asparagine 278–asparagine 293, glutamine 310–glutamine 327, and asparagine 334–serine 413. Residues methionine 422–valine 715 enclose the Tyrosine-protein phosphatase domain. Residues lysine 437–tyrosine 447 are compositionally biased toward basic residues. Cysteine 650 functions as the Phosphocysteine intermediate in the catalytic mechanism. The segment covering proline 786–phenylalanine 795 has biased composition (polar residues). Disordered regions lie at residues proline 786 to isoleucine 814 and leucine 834 to phenylalanine 990. 2 stretches are compositionally biased toward low complexity: residues serine 796 to proline 806 and leucine 834 to proline 850. Over residues leucine 851–serine 868 the composition is skewed to polar residues. 2 stretches are compositionally biased toward low complexity: residues asparagine 878 to glycine 916 and glycine 924 to asparagine 968.

This sequence belongs to the protein-tyrosine phosphatase family. Non-receptor class subfamily. In the anterior-like and prestalk cell types.

The protein localises to the cytoplasm. The catalysed reaction is O-phospho-L-tyrosyl-[protein] + H2O = L-tyrosyl-[protein] + phosphate. Functionally, seems to dephosphorylate a protein of 130 kDa (p130). In Dictyostelium discoideum (Social amoeba), this protein is Tyrosine-protein phosphatase 3 (ptpC).